The chain runs to 89 residues: Barrier-to-autointegration factor (89 aa).

M1 carries the N-acetylmethionine modification. T2 carries the post-translational modification N-acetylthreonine; in Barrier-to-autointegration factor, N-terminally processed. Residues T2 and T3 each carry the phosphothreonine; by VRK1 and VRK2 modification. Phosphoserine; by VRK1 and VRK2 is present on S4. The HhH domain maps to 20-35 (VGSLAGIGEVLGKKLE).

This sequence belongs to the BAF family. Homodimer. Heterodimerizes with BANF2. Interacts with ANKLE2/LEM4, leading to decreased phosphorylation by VRK1 and promoting dephosphorylation by protein phosphatase 2A (PP2A). Binds non-specifically to double-stranded DNA, and is found as a hexamer or dodecamer upon DNA binding. Binds to LEM domain-containing nuclear proteins such as LEMD3/MAN1, TMPO/LAP2 and EMD (emerin). Interacts with ANKLE1 (via LEM domain); the interaction may favor BANF1 dimerization. Interacts with CRX and LMNA (lamin-A). Binds linker histone H1.1 and core histones H3. Interacts with LEMD2 (via LEM domain). Interacts with PARP1; interaction takes place in response to oxidative DNA damage. Post-translationally, ser-4 is the major site of phosphorylation as compared to Thr-2 and Thr-3. Phosphorylation on Thr-2; Thr-3 and Ser-4 disrupts its ability to bind DNA and reduces its ability to bind LEM domain-containing proteins. Non phosphorylated BAF seems to enhance binding between EMD and LMNA. Dephosphorylated by protein phosphatase 2A (PP2A) following interaction with ANKLE2/LEM4 during mitotic exit, leading to mitotic nuclear envelope reassembly.

The protein resides in the nucleus. Its subcellular location is the chromosome. The protein localises to the nucleus envelope. It is found in the cytoplasm. Non-specific DNA-binding protein that plays key roles in mitotic nuclear reassembly, chromatin organization, DNA damage response, gene expression and intrinsic immunity against foreign DNA. Contains two non-specific double-stranded DNA (dsDNA)-binding sites which promote DNA cross-bridging. Plays a key role in nuclear membrane reformation at the end of mitosis by driving formation of a single nucleus in a spindle-independent manner. Transiently cross-bridges anaphase chromosomes via its ability to bridge distant DNA sites, leading to the formation of a dense chromatin network at the chromosome ensemble surface that limits membranes to the surface. Also acts as a negative regulator of innate immune activation by restricting CGAS activity toward self-DNA upon acute loss of nuclear membrane integrity. Outcompetes CGAS for DNA-binding, thereby preventing CGAS activation and subsequent damaging autoinflammatory responses. Also involved in DNA damage response: interacts with PARP1 in response to oxidative stress, thereby inhibiting the ADP-ribosyltransferase activity of PARP1. Involved in the recognition of exogenous dsDNA in the cytosol: associates with exogenous dsDNA immediately after its appearance in the cytosol at endosome breakdown and is required to avoid autophagy. In case of poxvirus infection, has an antiviral activity by blocking viral DNA replication. The protein is Barrier-to-autointegration factor (BANF1) of Bos taurus (Bovine).